The primary structure comprises 108 residues: SPbeta prophage-derived uncharacterized HTH-type transcriptional regulator YonR (108 aa).

An HTH cro/C1-type domain is found at 6-60 (LKKCRTSKGYSQQRMADFLGITRQGYGKYEIGKAEPDLKTLTKLSNILGVSTDFL). The segment at residues 17-36 (QQRMADFLGITRQGYGKYEI) is a DNA-binding region (H-T-H motif).

This is SPbeta prophage-derived uncharacterized HTH-type transcriptional regulator YonR (yonR) from Bacillus subtilis (strain 168).